A 206-amino-acid chain; its full sequence is Guanylate kinase (206 aa).

One can recognise a Guanylate kinase-like domain in the interval 5–183; it reads FNLLILSGPS…SKEIILSIAK (179 aa). 12-19 lines the ATP pocket; it reads GPSGAGKS.

Belongs to the guanylate kinase family.

Its subcellular location is the cytoplasm. It carries out the reaction GMP + ATP = GDP + ADP. Essential for recycling GMP and indirectly, cGMP. In Helicobacter pylori (strain J99 / ATCC 700824) (Campylobacter pylori J99), this protein is Guanylate kinase (gmk).